Reading from the N-terminus, the 961-residue chain is MRWLTLIAVAHLIAFLSSAEITCPRIPEKCDCKISKSMIILSCNGEDVKTIAQTVGTSQIDELHILNGTDVKIESLPFNGLRTIAILNSTLQSFSPTAWRHVEATIEHITINGNELKTVPVFGNLSTLMSMNLNSNQISSIPDKAFNGLSALTQLRLENNAICDFPPKSLDAVKASLVLLDVSGNCLDAIPAQILRNAANLMYLDLGSNNISEINNFELMNLPFLRELRVQNNTLRRIHPMAFMNVPQLQYLYLQDNIISTLDGNRLQGFKNLEVLDVSNNALYALPSLKDLPNLKQVRVDGNLITKIETLAFSNNPNLQLISVQNNNIVQISRNSFESLDKLVVLLVGNNSLAKIERGMFDGMKNLQQLSIRNNTLTALDASSFAQLAHLTTLDLGHNKIHDIEEGTFDKLSKLFWLDLSNNKISGFKTSVFKKKISNILLDGNQLICDESFNEFLTYLIANKVRTFLPFQQEIMCHGPEKYAGVRLKDLMMKKANETLSEGSRLLGVPQGSNQHSLLSSFLPSLGPLGTLNGAGGAAIPLVNTLTNTIPALRSIPGFGGNIPVGTGASSVPNKNLNDAIEGFTGPLVRFATGGQPVASDIEQLIRSIPNMVVNVPGFGDIDLSKMDPTMIQYVLNGGQIPGIDKATLDKIVKQTMNKMHTAAAANLAGNPVEGQEKVLPPLDKLPSGLVTQVMSGEPLPGLNENQTKIIMEYYTHQMPGMDGIPARPVESQGNTTANNMFNPAMFDLLKMLPPGYNLSKIPMEVIAAVTRGEVPDMRLLPEDLLEHFKQHTTSLTSMFAGATAKNISIEEILEKLPVFVRPELSTFVPYDINELTSEMVLEQEQNERHRNIRIITAIALAFVGAVTVVVIIFFVNYTKKQRRLRKSLVYRSSPSSSGSSGQNAANESGRSSAAPSPIRPPLMNIPKTPNNRTMESTFGQPQLCSTLLENPQAVSHRSRH.

A signal peptide spans M1–S18. Over A19–R854 the chain is Extracellular. 17 LRR repeats span residues I60–F78, N79–H101, E103–N124, L125–G148, S150–A172, K174–N197, A199–L222, P223–N245, P247–G269, F270–N294, I305–N316, P317–S339, L340–G363, M364–Q387, L388–K411, S413–K435, and I437–E455. Residues I855 to F875 traverse the membrane as a helical segment. At V876–H961 the chain is on the cytoplasmic side. Residues V890 to Q943 are disordered. Residues S893–G902 show a composition bias toward low complexity. Residues K928 to Q943 show a composition bias toward polar residues.

In L1 larvae, expressed in a subset of epithelial cells including epidermal, vulval and rectal cells and the excretory duct and pore. Also detected in some neurons. Absent from internal epithelia such as the gut and pharyngeal tubes.

Its subcellular location is the apical cell membrane. Functionally, required for apical extracellular matrix organization and epithelial junction maintenance. The protein is Leucine-rich repeat-containing protein egg-6 of Caenorhabditis elegans.